A 527-amino-acid polypeptide reads, in one-letter code: PTS system maltose-specific EIICB component (527 aa).

A PTS EIIC type-1 domain is found at Met1–Lys418. 12 helical membrane-spanning segments follow: residues Phe8–Ile28, Gly59–Ala79, Val93–Gly113, Ile132–Leu152, Tyr173–Trp193, Ile200–Phe220, Ile224–Val244, Phe276–Val296, Leu305–Pro325, Ile326–Ala346, Val357–Phe377, and Met382–Phe402. One can recognise a PTS EIIB type-1 domain in the interval Asp449–Gln527. Cys471 functions as the Phosphocysteine intermediate; for EIIB activity in the catalytic mechanism.

Its subcellular location is the cell membrane. The catalysed reaction is D-maltose(out) + N(pros)-phospho-L-histidyl-[protein] = alpha-maltose 6'-phosphate(in) + L-histidyl-[protein]. In terms of biological role, the phosphoenolpyruvate-dependent sugar phosphotransferase system (sugar PTS), a major carbohydrate active transport system, catalyzes the phosphorylation of incoming sugar substrates concomitantly with their translocation across the cell membrane. This system is involved in maltose transport. This chain is PTS system maltose-specific EIICB component, found in Bacillus subtilis (strain 168).